Consider the following 499-residue polypeptide: Bifunctional NAD(P)H-hydrate repair enzyme Nnr (499 aa).

The tract at residues 1 to 217 (MFITSKEMRR…PEIAERICGP (217 aa)) is NAD(P)H-hydrate epimerase. Positions 8 to 213 (MRRIELNSRW…NAGIPEIAER (206 aa)) constitute a YjeF N-terminal domain. The interval 54-58 (GNGGD) is NADPHX 1; for epimerase activity. K(+) contacts are provided by N55 and D124. An NADPHX 1; for epimerase activity region spans residues 128–134 (GFGIRGR). Residue D160 participates in (6S)-NADPHX binding. T163 is a binding site for K(+). One can recognise a YjeF C-terminal domain in the interval 217-485 (PGDLITSDIW…EYVPKVLRNP (269 aa)). Residues 217–499 (PGDLITSDIW…PEAVTEVRRD (283 aa)) form an ADP-dependent (S)-NAD(P)H-hydrate dehydratase region. Residue G314 participates in (6S)-NADPHX binding. Residues 360 to 366 (HAGEFRR) form an NADPHX 2; for dehydratase activity region. ADP contacts are provided by residues 397–401 (KGRVD) and 417–426 (TPAMTVGGTG). D427 lines the (6S)-NADPHX pocket.

It in the N-terminal section; belongs to the NnrE/AIBP family. This sequence in the C-terminal section; belongs to the NnrD/CARKD family. The cofactor is K(+).

The catalysed reaction is (6S)-NADHX + ADP = AMP + phosphate + NADH + H(+). The enzyme catalyses (6S)-NADPHX + ADP = AMP + phosphate + NADPH + H(+). It catalyses the reaction (6R)-NADHX = (6S)-NADHX. It carries out the reaction (6R)-NADPHX = (6S)-NADPHX. Its function is as follows. Bifunctional enzyme that catalyzes the epimerization of the S- and R-forms of NAD(P)HX and the dehydration of the S-form of NAD(P)HX at the expense of ADP, which is converted to AMP. This allows the repair of both epimers of NAD(P)HX, a damaged form of NAD(P)H that is a result of enzymatic or heat-dependent hydration. The protein is Bifunctional NAD(P)H-hydrate repair enzyme Nnr (nnr) of Methanopyrus kandleri (strain AV19 / DSM 6324 / JCM 9639 / NBRC 100938).